A 321-amino-acid polypeptide reads, in one-letter code: Aldose reductase C (321 aa).

Position 22–31 (22–31 (GNQIPSIGLG)) interacts with NADP(+). The Proton donor role is filled by Y62. H124 is a substrate binding site. An NADP(+)-binding site is contributed by 227 to 281 (SPLGQGKCDFFSNKILKSIAGKYKKSVANVIFKWLNQRGIAAIPKSGNHSRIIEN).

The protein belongs to the aldo/keto reductase family.

It carries out the reaction an alditol + NAD(+) = an aldose + NADH + H(+). The catalysed reaction is an alditol + NADP(+) = an aldose + NADPH + H(+). In terms of biological role, catalyzes the NADPH-dependent reduction of a wide variety of carbonyl-containing compounds to their corresponding alcohols with a broad range of catalytic efficiencies. This is Aldose reductase C (alrC) from Dictyostelium discoideum (Social amoeba).